The primary structure comprises 264 residues: Eukaryotic translation initiation factor 6 (264 aa).

The protein belongs to the eIF-6 family. In terms of assembly, monomer. Associates with the 60S ribosomal subunit.

It is found in the cytoplasm. The protein resides in the nucleus. Its subcellular location is the nucleolus. Binds to the 60S ribosomal subunit and prevents its association with the 40S ribosomal subunit to form the 80S initiation complex in the cytoplasm. May also be involved in ribosome biogenesis. This Toxoplasma gondii (strain ATCC 50861 / VEG) protein is Eukaryotic translation initiation factor 6.